We begin with the raw amino-acid sequence, 763 residues long: DNA polymerase 3 (763 aa).

The protein belongs to the DNA polymerase type-B family.

The enzyme catalyses DNA(n) + a 2'-deoxyribonucleoside 5'-triphosphate = DNA(n+1) + diphosphate. The chain is DNA polymerase 3 (dpo3) from Saccharolobus shibatae (strain ATCC 51178 / DSM 5389 / JCM 8931 / NBRC 15437 / B12) (Sulfolobus shibatae).